A 551-amino-acid polypeptide reads, in one-letter code: Formate--tetrahydrofolate ligase (551 aa).

65 to 72 (TPAGEGKT) is an ATP binding site.

This sequence belongs to the formate--tetrahydrofolate ligase family.

The enzyme catalyses (6S)-5,6,7,8-tetrahydrofolate + formate + ATP = (6R)-10-formyltetrahydrofolate + ADP + phosphate. It functions in the pathway one-carbon metabolism; tetrahydrofolate interconversion. This is Formate--tetrahydrofolate ligase from Thermosipho africanus (strain TCF52B).